The sequence spans 854 residues: Patatin-like phospholipase domain-containing protein CHGG_02900 (854 aa).

3 disordered regions span residues 1–29 (MAGP…YGFP), 58–138 (LSAP…PPLS), and 159–186 (QRRV…RSKD). Residues 96 to 116 (DLARRPESSGVGFHDEDRTAR) are compositionally biased toward basic and acidic residues. A compositionally biased stretch (low complexity) spans 119-132 (PAGAATAAAAGVAT). The chain crosses the membrane as a helical span at residues 199 to 219 (WPLLGVVTCWLVGLSVVHVLA). In terms of domain architecture, PNPLA spans 387–578 (LCLSGGATFA…RTDIPIKALN (192 aa)). A GXSXG motif is present at residues 418-422 (GTSGG). Catalysis depends on S420, which acts as the Nucleophile. D565 (proton acceptor) is an active-site residue. Disordered stretches follow at residues 724 to 776 (RENR…SILS) and 791 to 830 (RGGI…LEFG). Residues 729 to 751 (GGGLGDGGVGSSGGAGGGAGGGQ) show a composition bias toward gly residues. Over residues 752 to 761 (AEAVAGQAAG) the composition is skewed to low complexity. The segment covering 799–812 (TESEDETSDLDADF) has biased composition (acidic residues).

It belongs to the PLPL family.

It is found in the membrane. Probable lipid hydrolase. This Chaetomium globosum (strain ATCC 6205 / CBS 148.51 / DSM 1962 / NBRC 6347 / NRRL 1970) (Soil fungus) protein is Patatin-like phospholipase domain-containing protein CHGG_02900.